The primary structure comprises 123 residues: Large ribosomal subunit protein uL18 (123 aa).

This sequence belongs to the universal ribosomal protein uL18 family. In terms of assembly, part of the 50S ribosomal subunit; part of the 5S rRNA/L5/L18/L25 subcomplex. Contacts the 5S and 23S rRNAs.

This is one of the proteins that bind and probably mediate the attachment of the 5S RNA into the large ribosomal subunit, where it forms part of the central protuberance. The polypeptide is Large ribosomal subunit protein uL18 (Chlamydia trachomatis serovar L2 (strain ATCC VR-902B / DSM 19102 / 434/Bu)).